Reading from the N-terminus, the 335-residue chain is Zinc-type alcohol dehydrogenase-like protein SAR2277 (335 aa).

The protein belongs to the zinc-containing alcohol dehydrogenase family. Quinone oxidoreductase subfamily.

This chain is Zinc-type alcohol dehydrogenase-like protein SAR2277, found in Staphylococcus aureus (strain MRSA252).